The chain runs to 95 residues: Aspartyl/glutamyl-tRNA(Asn/Gln) amidotransferase subunit C (95 aa).

Belongs to the GatC family. In terms of assembly, heterotrimer of A, B and C subunits.

The enzyme catalyses L-glutamyl-tRNA(Gln) + L-glutamine + ATP + H2O = L-glutaminyl-tRNA(Gln) + L-glutamate + ADP + phosphate + H(+). The catalysed reaction is L-aspartyl-tRNA(Asn) + L-glutamine + ATP + H2O = L-asparaginyl-tRNA(Asn) + L-glutamate + ADP + phosphate + 2 H(+). Allows the formation of correctly charged Asn-tRNA(Asn) or Gln-tRNA(Gln) through the transamidation of misacylated Asp-tRNA(Asn) or Glu-tRNA(Gln) in organisms which lack either or both of asparaginyl-tRNA or glutaminyl-tRNA synthetases. The reaction takes place in the presence of glutamine and ATP through an activated phospho-Asp-tRNA(Asn) or phospho-Glu-tRNA(Gln). In Chlorobium phaeovibrioides (strain DSM 265 / 1930) (Prosthecochloris vibrioformis (strain DSM 265)), this protein is Aspartyl/glutamyl-tRNA(Asn/Gln) amidotransferase subunit C.